The chain runs to 465 residues: Dihydrolipoyllysine-residue acetyltransferase component 5 of pyruvate dehydrogenase complex, chloroplastic (465 aa).

The transit peptide at 1 to 31 (MSRLLQTPFLPSVSLPTKTRSSVTGFRVKPR) directs the protein to the chloroplast. The Lipoyl-binding domain maps to 39–114 (IREIFMPALS…PVGSAIALLA (76 aa)). K80 is modified (N6-lipoyllysine). Residues 123–148 (AKAKASGGGGGGDSKAPPASPPTAAV) are disordered. Residues 136 to 148 (SKAPPASPPTAAV) show a composition bias toward low complexity. The 38-residue stretch at 184-221 (VASPYAKKLAKELKVELAGLVGSGPMGRIVAKDVEAVA) folds into the Peripheral subunit-binding (PSBD) domain. H438 is a catalytic residue.

This sequence belongs to the 2-oxoacid dehydrogenase family. It depends on (R)-lipoate as a cofactor.

The protein localises to the plastid. Its subcellular location is the chloroplast stroma. It catalyses the reaction N(6)-[(R)-dihydrolipoyl]-L-lysyl-[protein] + acetyl-CoA = N(6)-[(R)-S(8)-acetyldihydrolipoyl]-L-lysyl-[protein] + CoA. The pyruvate dehydrogenase complex catalyzes the overall conversion of pyruvate to acetyl-CoA and CO(2). It contains multiple copies of three enzymatic components: pyruvate dehydrogenase (E1), dihydrolipoamide acetyltransferase (E2) and lipoamide dehydrogenase (E3). The polypeptide is Dihydrolipoyllysine-residue acetyltransferase component 5 of pyruvate dehydrogenase complex, chloroplastic (EMB3003) (Arabidopsis thaliana (Mouse-ear cress)).